Consider the following 297-residue polypeptide: CASP-like protein 4A2 (297 aa).

Residues 1-20 are compositionally biased toward polar residues; that stretch reads MKMKRTASSNSEAQSYNESP. The tract at residues 1–135 is disordered; the sequence is MKMKRTASSN…PINGEESTRT (135 aa). The Cytoplasmic portion of the chain corresponds to 1 to 149; it reads MKMKRTASSN…ARGDDLVSLT (149 aa). Pro residues predominate over residues 69 to 83; that stretch reads LPSPIPPPPPQFPPP. A helical membrane pass occupies residues 150 to 170; it reads ALGFRITEVILCVISFSIMAA. Residues 171–191 are Extracellular-facing; sequence DKTQGWSGDSYDRYKEYRYCL. A helical transmembrane segment spans residues 192–212; sequence AVNVIAFVYSAFEACDAACYI. The Cytoplasmic segment spans residues 213-225; that stretch reads AKESYMINCGFHD. The chain crosses the membrane as a helical span at residues 226–246; sequence LFVFSMDQLLAYLLMSASSCA. Topologically, residues 247–265 are extracellular; that stretch reads ATRVDDWVSNWGKDEFTQM. Residues 266–286 form a helical membrane-spanning segment; sequence ATASIAVSFLAFGAFAVSALI. Residues 287 to 297 lie on the Cytoplasmic side of the membrane; the sequence is SSYRLFTHASS.

It belongs to the Casparian strip membrane proteins (CASP) family. Homodimer and heterodimers.

Its subcellular location is the cell membrane. The chain is CASP-like protein 4A2 from Arabidopsis thaliana (Mouse-ear cress).